A 671-amino-acid chain; its full sequence is MESIEQQLTELRTTLRHHEYLYHVMDAPEIPDAEYDRLMRELRELETKHPELITPDSPTQRVGAAPLAAFSQIRHEVPMLSLDNVFDEESFLAFNKRVQDRLKSNEKVTWCCELKLDGLAVSILYENGVLVSAATRGDGTTGEDITSNVRTIRAIPLKLHGENIPARLEVRGEVFLPQAGFEKINEDARRTGGKVFANPRNAAAGSLRQLDPRITAKRPLTFFCYGVGVLEGGELPDTHLGRLLQFKKWGLPVSDRVTLCESAEEVLAFYHKVEEDRPTLGFDIDGVVIKVNSLAQQEQLGFVARAPRWAVAFKFPAQEQMTFVRDVEFQVGRTGAITPVARLEPVHVAGVLVSNATLHNADEIERLGLRIGDKVVIRRAGDVIPQVVNVVLSERPEDTREVVFPTHCPVCGSDVERVEGEAVARCTGGLICGAQRKESLKHFVSRRAMDVDGMGDKIIDQLVEKEYVHTPADLFKLTAGKLTGLERMGPKSAQNVVNALEKAKETTFARFLYALGIREVGEATAAGLAAYFGTLEALEAASIEELQKVPDVGIVVASHVHNFFAEESNRNVISELLAEGVHWPEPIVINAEEIDSPFAGKTVVLTGSLSQMSRDDAKARLVELGAKVAGSVSKKTDLVIAGEAAGSKLAKAQELGIEVIDETEMLHLLGS.

Residues 32-36 (DAEYD), 81-82 (SL), and glutamate 113 each bind NAD(+). Catalysis depends on lysine 115, which acts as the N6-AMP-lysine intermediate. Arginine 136, glutamate 173, lysine 290, and lysine 314 together coordinate NAD(+). Zn(2+) contacts are provided by cysteine 408, cysteine 411, cysteine 426, and cysteine 432. One can recognise a BRCT domain in the interval 593-671 (EIDSPFAGKT…ETEMLHLLGS (79 aa)).

Belongs to the NAD-dependent DNA ligase family. LigA subfamily. Mg(2+) serves as cofactor. Mn(2+) is required as a cofactor.

The catalysed reaction is NAD(+) + (deoxyribonucleotide)n-3'-hydroxyl + 5'-phospho-(deoxyribonucleotide)m = (deoxyribonucleotide)n+m + AMP + beta-nicotinamide D-nucleotide.. DNA ligase that catalyzes the formation of phosphodiester linkages between 5'-phosphoryl and 3'-hydroxyl groups in double-stranded DNA using NAD as a coenzyme and as the energy source for the reaction. It is essential for DNA replication and repair of damaged DNA. This is DNA ligase from Escherichia coli O6:K15:H31 (strain 536 / UPEC).